The primary structure comprises 429 residues: UDP-N-acetylglucosamine 1-carboxyvinyltransferase (429 aa).

22-23 is a binding site for phosphoenolpyruvate; that stretch reads KN. Arg-102 contributes to the UDP-N-acetyl-alpha-D-glucosamine binding site. Cys-126 serves as the catalytic Proton donor. Position 126 is a 2-(S-cysteinyl)pyruvic acid O-phosphothioketal (Cys-126). UDP-N-acetyl-alpha-D-glucosamine is bound by residues 131–135, 171–174, Asp-316, and Ile-338; these read RPVDL and KVSV.

Belongs to the EPSP synthase family. MurA subfamily.

The protein resides in the cytoplasm. It carries out the reaction phosphoenolpyruvate + UDP-N-acetyl-alpha-D-glucosamine = UDP-N-acetyl-3-O-(1-carboxyvinyl)-alpha-D-glucosamine + phosphate. It participates in cell wall biogenesis; peptidoglycan biosynthesis. Functionally, cell wall formation. Adds enolpyruvyl to UDP-N-acetylglucosamine. The protein is UDP-N-acetylglucosamine 1-carboxyvinyltransferase of Brucella abortus (strain S19).